The sequence spans 628 residues: DNA-directed RNA polymerase subunit beta' (628 aa).

The Zn(2+) site is built by cysteine 70, cysteine 72, cysteine 85, and cysteine 88. The Mg(2+) site is built by aspartate 472, aspartate 474, and aspartate 476.

It belongs to the RNA polymerase beta' chain family. RpoC1 subfamily. In plastids the minimal PEP RNA polymerase catalytic core is composed of four subunits: alpha, beta, beta', and beta''. When a (nuclear-encoded) sigma factor is associated with the core the holoenzyme is formed, which can initiate transcription. Mg(2+) serves as cofactor. The cofactor is Zn(2+).

It is found in the plastid. The protein resides in the chloroplast. It carries out the reaction RNA(n) + a ribonucleoside 5'-triphosphate = RNA(n+1) + diphosphate. Its function is as follows. DNA-dependent RNA polymerase catalyzes the transcription of DNA into RNA using the four ribonucleoside triphosphates as substrates. The polypeptide is DNA-directed RNA polymerase subunit beta' (Gracilaria tenuistipitata var. liui (Red alga)).